A 115-amino-acid chain; its full sequence is Holo-[acyl-carrier-protein] synthase (115 aa).

Aspartate 6 and glutamate 51 together coordinate Mg(2+).

The protein belongs to the P-Pant transferase superfamily. AcpS family. Mg(2+) serves as cofactor.

The protein resides in the cytoplasm. It carries out the reaction apo-[ACP] + CoA = holo-[ACP] + adenosine 3',5'-bisphosphate + H(+). Functionally, transfers the 4'-phosphopantetheine moiety from coenzyme A to a Ser of acyl-carrier-protein. In Campylobacter jejuni subsp. doylei (strain ATCC BAA-1458 / RM4099 / 269.97), this protein is Holo-[acyl-carrier-protein] synthase.